Here is a 357-residue protein sequence, read N- to C-terminus: UPF0744 protein C106.03 (357 aa).

Ser282 carries the post-translational modification Phosphoserine.

This sequence belongs to the UPF0744 family.

The protein localises to the cytoplasm. This Schizosaccharomyces pombe (strain 972 / ATCC 24843) (Fission yeast) protein is UPF0744 protein C106.03.